Consider the following 359-residue polypeptide: UDP-3-O-acylglucosamine N-acyltransferase (359 aa).

Residue His256 is the Proton acceptor of the active site.

This sequence belongs to the transferase hexapeptide repeat family. LpxD subfamily. As to quaternary structure, homotrimer.

The enzyme catalyses a UDP-3-O-[(3R)-3-hydroxyacyl]-alpha-D-glucosamine + a (3R)-hydroxyacyl-[ACP] = a UDP-2-N,3-O-bis[(3R)-3-hydroxyacyl]-alpha-D-glucosamine + holo-[ACP] + H(+). It participates in bacterial outer membrane biogenesis; LPS lipid A biosynthesis. Functionally, catalyzes the N-acylation of UDP-3-O-acylglucosamine using 3-hydroxyacyl-ACP as the acyl donor. Is involved in the biosynthesis of lipid A, a phosphorylated glycolipid that anchors the lipopolysaccharide to the outer membrane of the cell. In Rhodopseudomonas palustris (strain BisB5), this protein is UDP-3-O-acylglucosamine N-acyltransferase.